Consider the following 460-residue polypeptide: Chromosomal replication initiator protein DnaA 1 (460 aa).

Positions 1–68 (MRAWEEFLLL…KSGLVNNNNK (68 aa)) are domain I, interacts with DnaA modulators. Residues 68–102 (KPIRVHVTSVDKAAPFYKEKQMQQEKTAYFTMHYG) form a domain II region. Residues 103 to 321 (SVNPEMTFSN…HALNLLAKRV (219 aa)) are domain III, AAA+ region. 4 residues coordinate ATP: Gly-151, Gly-153, Lys-154, and Thr-155. The segment at 322 to 460 (MYKKLSHQLL…EFFPSEEMII (139 aa)) is domain IV, binds dsDNA.

The protein belongs to the DnaA family. As to quaternary structure, oligomerizes as a right-handed, spiral filament on DNA at oriC.

The protein localises to the cytoplasm. Its function is as follows. Plays an essential role in the initiation and regulation of chromosomal replication. ATP-DnaA binds to the origin of replication (oriC) to initiate formation of the DNA replication initiation complex once per cell cycle. Binds the DnaA box (a 9 base pair repeat at the origin) and separates the double-stranded (ds)DNA. Forms a right-handed helical filament on oriC DNA; dsDNA binds to the exterior of the filament while single-stranded (ss)DNA is stabiized in the filament's interior. The ATP-DnaA-oriC complex binds and stabilizes one strand of the AT-rich DNA unwinding element (DUE), permitting loading of DNA polymerase. After initiation quickly degrades to an ADP-DnaA complex that is not apt for DNA replication. Binds acidic phospholipids. The sequence is that of Chromosomal replication initiator protein DnaA 1 from Chlamydia pneumoniae (Chlamydophila pneumoniae).